We begin with the raw amino-acid sequence, 641 residues long: Bilirubin reductase (641 aa).

Position 96 (Q96) interacts with FMN. The active-site Proton donor is R167. Residues K214, R295, and 317–318 (GR) contribute to the FMN site. [4Fe-4S] cluster-binding residues include C341, C344, C348, and C360. A391, E410, Q418, K428, and A455 together coordinate FAD.

This sequence in the N-terminal section; belongs to the NADH:flavin oxidoreductase/NADH oxidase family. It depends on FAD as a cofactor. The cofactor is FMN. [4Fe-4S] cluster is required as a cofactor.

It catalyses the reaction urobilinogen + 4 A = (4Z,15Z)-bilirubin IXalpha + 4 AH2. The enzyme catalyses urobilinogen + 2 A = (4Z,15Z)-mesobilirubin IXalpha + 2 AH2. It functions in the pathway porphyrin-containing compound metabolism; protoheme degradation. Bilirubin reductase that catalyzes reduction of mesobilirubin and/or bilirubin to urobilinogen, a key step during heme degradation. Urobilinogen then spontaneously degrades into urobilin, which gives urine its distinctive yellow color. The protein is Bilirubin reductase of Mediterraneibacter gnavus (strain CC55_001C).